Consider the following 65-residue polypeptide: Small ribosomal subunit protein bS21 (65 aa).

It belongs to the bacterial ribosomal protein bS21 family.

This is Small ribosomal subunit protein bS21 from Geobacter sp. (strain M21).